The following is a 316-amino-acid chain: 4-hydroxy-3-methylbut-2-enyl diphosphate reductase (316 aa).

Residue Cys-12 participates in [4Fe-4S] cluster binding. Positions 41 and 74 each coordinate (2E)-4-hydroxy-3-methylbut-2-enyl diphosphate. The dimethylallyl diphosphate site is built by His-41 and His-74. Positions 41 and 74 each coordinate isopentenyl diphosphate. Cys-96 contributes to the [4Fe-4S] cluster binding site. His-124 is a (2E)-4-hydroxy-3-methylbut-2-enyl diphosphate binding site. His-124 lines the dimethylallyl diphosphate pocket. His-124 is an isopentenyl diphosphate binding site. Glu-126 functions as the Proton donor in the catalytic mechanism. Thr-167 is a (2E)-4-hydroxy-3-methylbut-2-enyl diphosphate binding site. Cys-197 provides a ligand contact to [4Fe-4S] cluster. Residues Ser-225, Ser-226, Asn-227, and Ser-269 each coordinate (2E)-4-hydroxy-3-methylbut-2-enyl diphosphate. 4 residues coordinate dimethylallyl diphosphate: Ser-225, Ser-226, Asn-227, and Ser-269. Residues Ser-225, Ser-226, Asn-227, and Ser-269 each coordinate isopentenyl diphosphate.

The protein belongs to the IspH family. As to quaternary structure, homodimer. Requires [4Fe-4S] cluster as cofactor.

It catalyses the reaction isopentenyl diphosphate + 2 oxidized [2Fe-2S]-[ferredoxin] + H2O = (2E)-4-hydroxy-3-methylbut-2-enyl diphosphate + 2 reduced [2Fe-2S]-[ferredoxin] + 2 H(+). It carries out the reaction dimethylallyl diphosphate + 2 oxidized [2Fe-2S]-[ferredoxin] + H2O = (2E)-4-hydroxy-3-methylbut-2-enyl diphosphate + 2 reduced [2Fe-2S]-[ferredoxin] + 2 H(+). It participates in isoprenoid biosynthesis; dimethylallyl diphosphate biosynthesis; dimethylallyl diphosphate from (2E)-4-hydroxy-3-methylbutenyl diphosphate: step 1/1. It functions in the pathway isoprenoid biosynthesis; isopentenyl diphosphate biosynthesis via DXP pathway; isopentenyl diphosphate from 1-deoxy-D-xylulose 5-phosphate: step 6/6. Functionally, catalyzes the conversion of 1-hydroxy-2-methyl-2-(E)-butenyl 4-diphosphate (HMBPP) into a mixture of isopentenyl diphosphate (IPP) and dimethylallyl diphosphate (DMAPP). Acts in the terminal step of the DOXP/MEP pathway for isoprenoid precursor biosynthesis. The polypeptide is 4-hydroxy-3-methylbut-2-enyl diphosphate reductase (Pectobacterium atrosepticum (strain SCRI 1043 / ATCC BAA-672) (Erwinia carotovora subsp. atroseptica)).